A 247-amino-acid chain; its full sequence is Uridylate kinase (247 aa).

An ATP-binding site is contributed by 15 to 18; the sequence is KLSG. The segment at 23–28 is involved in allosteric activation by GTP; sequence GEEGFG. Position 57 (Gly-57) interacts with UMP. 2 residues coordinate ATP: Gly-58 and Arg-62. Residues Asp-77 and 138 to 145 each bind UMP; that span reads TGNPFFTT. Positions 165, 171, and 174 each coordinate ATP.

It belongs to the UMP kinase family. Homohexamer.

Its subcellular location is the cytoplasm. The catalysed reaction is UMP + ATP = UDP + ADP. Its pathway is pyrimidine metabolism; CTP biosynthesis via de novo pathway; UDP from UMP (UMPK route): step 1/1. Its activity is regulated as follows. Allosterically activated by GTP. Inhibited by UTP. Its function is as follows. Catalyzes the reversible phosphorylation of UMP to UDP. This chain is Uridylate kinase, found in Pseudoalteromonas atlantica (strain T6c / ATCC BAA-1087).